The following is a 641-amino-acid chain: ATP-dependent zinc metalloprotease FtsH (641 aa).

The Cytoplasmic portion of the chain corresponds to 1 to 16 (MNKQQKPKRSPLRPDY). Residues 17 to 37 (LVIVIIILLAIGMYFFFTEMM) form a helical membrane-spanning segment. Residues 38-131 (APKVKQFDEF…VSFVPHVSVD (94 aa)) lie on the Extracellular side of the membrane. Residues 132 to 152 (FWNIISTLLLIAAPIVLVVIM) traverse the membrane as a helical segment. The Cytoplasmic segment spans residues 153-641 (FRSMSSQSNK…EVEEDSKKSE (489 aa)). 222–229 (GQPGTGKT) contacts ATP. Residue His-444 coordinates Zn(2+). The active site involves Glu-445. Zn(2+) contacts are provided by His-448 and Asp-520.

In the central section; belongs to the AAA ATPase family. The protein in the C-terminal section; belongs to the peptidase M41 family. As to quaternary structure, homohexamer. The cofactor is Zn(2+).

It is found in the cell membrane. Acts as a processive, ATP-dependent zinc metallopeptidase for both cytoplasmic and membrane proteins. Plays a role in the quality control of integral membrane proteins. This Acholeplasma laidlawii (strain PG-8A) protein is ATP-dependent zinc metalloprotease FtsH.